We begin with the raw amino-acid sequence, 67 residues long: Preprofallaxidin-4 (67 aa).

A signal peptide spans methionine 1 to cysteine 22. Positions aspartate 23–arginine 46 are excised as a propeptide. A disordered region spans residues lysine 24–leucine 48. The span at glutamate 30–serine 42 shows a compositional bias: acidic residues.

The protein belongs to the frog skin active peptide (FSAP) family. Dermaseptin subfamily. In terms of tissue distribution, expressed by the skin glands.

The protein resides in the secreted. This Litoria fallax (Eastern dwarf tree frog) protein is Preprofallaxidin-4.